Reading from the N-terminus, the 426-residue chain is MKKSIFTSLYLQVLVAITIGILLGHFYPDLGTQMKPLGDGFVKLIKMIIAPVIFCTVVTGIAGMESMKAVGRTGAIALLYFEVVSTIALIIGLVVVNILQPGVGMNVDPNALDTKAVAVYADQAAQQGIVAFLLDVIPSSVIGAFASGNILQVLLFAVMFGFALHHLGEKGQLIFNVIDSFAKVIFGVINMIMKLAPIGAFGAMAFTIGKYGVGTLVQLGQLILCFYITCALFVVLVLGSIAKATGFSIFRFIAYIKEELLIVLGTSSSESALPRMLDKMEKVGCQKSVVGLVIPTGYSFNLDGTSIYLTMAAVFIAQATNAQMDIWHQVTLLVVLLLSSKGAAGVTGSGFIVLAATLSAVGHLPVAGLALILGIDRFMSEARALTNLIGNGVATIVVAKRCRQLNEKQMNAVLGGRDSALRDPIA.

8 helical membrane-spanning segments follow: residues 4–24 (SIFT…ILLG), 44–64 (LIKM…IAGM), 76–96 (IALL…LVVV), 142–162 (IGAF…MFGF), 184–204 (VIFG…FGAM), 222–242 (LILC…GSIA), 326–346 (IWHQ…AAGV), and 352–372 (IVLA…LALI).

The protein belongs to the dicarboxylate/amino acid:cation symporter (DAACS) (TC 2.A.23) family.

Its subcellular location is the cell inner membrane. In terms of biological role, responsible for the transport of dicarboxylates such as succinate, fumarate, and malate from the periplasm across the membrane. The polypeptide is C4-dicarboxylate transport protein (Edwardsiella ictaluri (strain 93-146)).